We begin with the raw amino-acid sequence, 224 residues long: Urease accessory protein UreF (224 aa).

This sequence belongs to the UreF family. In terms of assembly, ureD, UreF and UreG form a complex that acts as a GTP-hydrolysis-dependent molecular chaperone, activating the urease apoprotein by helping to assemble the nickel containing metallocenter of UreC. The UreE protein probably delivers the nickel.

The protein resides in the cytoplasm. In terms of biological role, required for maturation of urease via the functional incorporation of the urease nickel metallocenter. The protein is Urease accessory protein UreF of Escherichia coli O157:H7.